Reading from the N-terminus, the 317-residue chain is tRNA(Ile)-lysidine synthase (317 aa).

Position 30–35 (30–35 (SGGSDS)) interacts with ATP.

The protein belongs to the tRNA(Ile)-lysidine synthase family.

The protein localises to the cytoplasm. It catalyses the reaction cytidine(34) in tRNA(Ile2) + L-lysine + ATP = lysidine(34) in tRNA(Ile2) + AMP + diphosphate + H(+). Functionally, ligates lysine onto the cytidine present at position 34 of the AUA codon-specific tRNA(Ile) that contains the anticodon CAU, in an ATP-dependent manner. Cytidine is converted to lysidine, thus changing the amino acid specificity of the tRNA from methionine to isoleucine. The sequence is that of tRNA(Ile)-lysidine synthase from Chlamydia caviae (strain ATCC VR-813 / DSM 19441 / 03DC25 / GPIC) (Chlamydophila caviae).